The sequence spans 239 residues: Hexuronic acid methyltransferase AglP (239 aa).

It belongs to the FkbM methyltransferase family.

Its subcellular location is the cytoplasm. Its pathway is cell surface structure biogenesis; S-layer biogenesis. Functionally, involved in the assembly of a N-linked pentasaccharide that decorates the S-layer glycoprotein and flagellins. S-adenosyl-L-methionine-dependent methyltransferase that modifies the hexuronic acid found at position 4 of the pentasaccharide. This Haloferax volcanii (strain ATCC 29605 / DSM 3757 / JCM 8879 / NBRC 14742 / NCIMB 2012 / VKM B-1768 / DS2) (Halobacterium volcanii) protein is Hexuronic acid methyltransferase AglP (aglP).